A 445-amino-acid polypeptide reads, in one-letter code: MYNQQTYPSFTHNPALMPDGSGQYNLGTYTGMARHPHQAQAFFPFSGVKSDYGDLGGQTTSVGDTSAWNPLTSLDSANQLGISGQGNPFKNLKREREDDEEKSESPEPKCSPPSLPPAYYTHAWNPTTTFWSQVSSSGTTVVSKPLPTPLQPGDKCDPVEANKIFTSSPDKSGESGISSLDNSRCSSATSSSSGGTNVGTPRSLSRGASDGLSSDSEEEAPNSGEMEQFAKDLKHKRITMGYTQADVGYALGVLFGKTFSQTTICRFESLQLSFKNMCKLKPLLRSWLHEVENNENLQEIISRGQIIPQVQKRKHRTSIENNVKCTLENYFMQCSKPSAQEIAQIARELNMEKDVVRVWFCNRRQKGKRQVYPYIRENGGEPYDAPQTLTPPSQGPFPLPQVMPSQVFPTVPLGANPTIYVPTYHKNDMFPQAMHHGIGMGNQGN.

Polar residues-rich tracts occupy residues 76 to 88 (SANQ…QGNP) and 164 to 182 (IFTS…SLDN). Disordered regions lie at residues 76-116 (SANQ…PSLP) and 139-227 (TTVV…GEME). Residues 183 to 200 (SRCSSATSSSSGGTNVGT) show a composition bias toward low complexity. The POU-specific domain maps to 218–292 (EEAPNSGEME…LLRSWLHEVE (75 aa)). The homeobox DNA-binding region spans 312-371 (KRKHRTSIENNVKCTLENYFMQCSKPSAQEIAQIARELNMEKDVVRVWFCNRRQKGKRQV).

This sequence belongs to the POU transcription factor family. Class-5 subfamily. Interacts with the transcription factors tcf7l1/tcf3 and vegt. As to expression, initially (stage 9) expressed in all regions of the embryo, becoming localized to the ventroposterior regions by early neurula stages. In adults, expressed at a low level in the brain.

The protein localises to the nucleus. Functionally, transcription factor that binds to the octamer motif (5'-ATTTGCAT-3'). Antagonizes the activity of nodal/activin signaling during gastrulation to suppress mesendoderm formation. The protein is POU domain, class 5, transcription factor 1.2 (pou5f1.2) of Xenopus laevis (African clawed frog).